Here is a 251-residue protein sequence, read N- to C-terminus: Imidazole glycerol phosphate synthase subunit HisF (251 aa).

Active-site residues include D11 and D130.

It belongs to the HisA/HisF family. In terms of assembly, heterodimer of HisH and HisF.

It is found in the cytoplasm. The enzyme catalyses 5-[(5-phospho-1-deoxy-D-ribulos-1-ylimino)methylamino]-1-(5-phospho-beta-D-ribosyl)imidazole-4-carboxamide + L-glutamine = D-erythro-1-(imidazol-4-yl)glycerol 3-phosphate + 5-amino-1-(5-phospho-beta-D-ribosyl)imidazole-4-carboxamide + L-glutamate + H(+). It participates in amino-acid biosynthesis; L-histidine biosynthesis; L-histidine from 5-phospho-alpha-D-ribose 1-diphosphate: step 5/9. In terms of biological role, IGPS catalyzes the conversion of PRFAR and glutamine to IGP, AICAR and glutamate. The HisF subunit catalyzes the cyclization activity that produces IGP and AICAR from PRFAR using the ammonia provided by the HisH subunit. The polypeptide is Imidazole glycerol phosphate synthase subunit HisF (Listeria monocytogenes serotype 4b (strain CLIP80459)).